The primary structure comprises 198 residues: Putative 3-methyladenine DNA glycosylase (198 aa).

The protein belongs to the DNA glycosylase MPG family.

The protein is Putative 3-methyladenine DNA glycosylase of Natranaerobius thermophilus (strain ATCC BAA-1301 / DSM 18059 / JW/NM-WN-LF).